Consider the following 564-residue polypeptide: Probable beta-glucosidase btgE (564 aa).

Residues 1–18 (MRGAFLATAAAIAGTAMA) form the signal peptide. The tract at residues 285–304 (ATSSVAPSSSPSKPAAPSGA) is disordered. N-linked (GlcNAc...) asparagine glycosylation occurs at asparagine 404. The active-site Proton donor is glutamate 405. Glutamate 501 functions as the Nucleophile in the catalytic mechanism.

This sequence belongs to the glycosyl hydrolase 17 family.

It is found in the secreted. It localises to the cell wall. The catalysed reaction is Hydrolysis of terminal, non-reducing beta-D-glucosyl residues with release of beta-D-glucose.. The protein operates within glycan metabolism; cellulose degradation. In terms of biological role, beta-glucosidases are one of a number of cellulolytic enzymes involved in the degradation of cellulosic biomass. Catalyzes the last step releasing glucose from the inhibitory cellobiose. The sequence is that of Probable beta-glucosidase btgE (btgE) from Aspergillus clavatus (strain ATCC 1007 / CBS 513.65 / DSM 816 / NCTC 3887 / NRRL 1 / QM 1276 / 107).